Consider the following 450-residue polypeptide: Bifunctional protein GlmU (450 aa).

The interval 1 to 226 (MLAVAVLAAG…PDEVNGINNR (226 aa)) is pyrophosphorylase. Residues 7–10 (LAAG), Lys21, Gln73, and 78–79 (GT) contribute to the UDP-N-acetyl-alpha-D-glucosamine site. Asp103 contacts Mg(2+). Gly140, Glu155, Asn170, and Asn224 together coordinate UDP-N-acetyl-alpha-D-glucosamine. Asn224 provides a ligand contact to Mg(2+). Positions 227 to 247 (QQLAQCETMLQERLRHHWMAE) are linker. Residues 248 to 450 (GVTFVDPASC…IKENWAGPQG (203 aa)) are N-acetyltransferase. 2 residues coordinate UDP-N-acetyl-alpha-D-glucosamine: Arg329 and Lys347. Residue His359 is the Proton acceptor of the active site. Tyr362 and Asn373 together coordinate UDP-N-acetyl-alpha-D-glucosamine. Acetyl-CoA-binding positions include Ala376, 382-383 (NY), Ala419, and Arg436.

The protein in the N-terminal section; belongs to the N-acetylglucosamine-1-phosphate uridyltransferase family. This sequence in the C-terminal section; belongs to the transferase hexapeptide repeat family. In terms of assembly, homotrimer. Mg(2+) is required as a cofactor.

The protein resides in the cytoplasm. The catalysed reaction is alpha-D-glucosamine 1-phosphate + acetyl-CoA = N-acetyl-alpha-D-glucosamine 1-phosphate + CoA + H(+). It catalyses the reaction N-acetyl-alpha-D-glucosamine 1-phosphate + UTP + H(+) = UDP-N-acetyl-alpha-D-glucosamine + diphosphate. It functions in the pathway nucleotide-sugar biosynthesis; UDP-N-acetyl-alpha-D-glucosamine biosynthesis; N-acetyl-alpha-D-glucosamine 1-phosphate from alpha-D-glucosamine 6-phosphate (route II): step 2/2. It participates in nucleotide-sugar biosynthesis; UDP-N-acetyl-alpha-D-glucosamine biosynthesis; UDP-N-acetyl-alpha-D-glucosamine from N-acetyl-alpha-D-glucosamine 1-phosphate: step 1/1. Its pathway is bacterial outer membrane biogenesis; LPS lipid A biosynthesis. Functionally, catalyzes the last two sequential reactions in the de novo biosynthetic pathway for UDP-N-acetylglucosamine (UDP-GlcNAc). The C-terminal domain catalyzes the transfer of acetyl group from acetyl coenzyme A to glucosamine-1-phosphate (GlcN-1-P) to produce N-acetylglucosamine-1-phosphate (GlcNAc-1-P), which is converted into UDP-GlcNAc by the transfer of uridine 5-monophosphate (from uridine 5-triphosphate), a reaction catalyzed by the N-terminal domain. The chain is Bifunctional protein GlmU from Synechococcus sp. (strain RCC307).